Reading from the N-terminus, the 496-residue chain is NAD(P)H-quinone oxidoreductase subunit 2 A, chloroplastic (496 aa).

The next 14 helical transmembrane spans lie at 13 to 33 (SILP…IDLL), 41 to 61 (TFWS…ILLL), 83 to 103 (IFRF…VDYI), 110 to 130 (VTEF…LCGA), 133 to 153 (LISI…LSGY), 168 to 188 (LLMG…PYGL), 213 to 233 (VSIA…LVPF), 245 to 265 (PTPV…ALAT), 279 to 299 (WHLP…LIAV), 307 to 327 (MLAY…IAGD), 338 to 358 (YMLI…SFGL), 380 to 400 (LSLV…GFFG), 413 to 435 (LYFL…SRII), and 470 to 490 (MILC…IIAI).

Belongs to the complex I subunit 2 family. NDH is composed of at least 16 different subunits, 5 of which are encoded in the nucleus.

It is found in the plastid. It localises to the chloroplast thylakoid membrane. It catalyses the reaction a plastoquinone + NADH + (n+1) H(+)(in) = a plastoquinol + NAD(+) + n H(+)(out). It carries out the reaction a plastoquinone + NADPH + (n+1) H(+)(in) = a plastoquinol + NADP(+) + n H(+)(out). In terms of biological role, NDH shuttles electrons from NAD(P)H:plastoquinone, via FMN and iron-sulfur (Fe-S) centers, to quinones in the photosynthetic chain and possibly in a chloroplast respiratory chain. The immediate electron acceptor for the enzyme in this species is believed to be plastoquinone. Couples the redox reaction to proton translocation, and thus conserves the redox energy in a proton gradient. This Psilotum nudum (Whisk fern) protein is NAD(P)H-quinone oxidoreductase subunit 2 A, chloroplastic.